A 92-amino-acid chain; its full sequence is Large ribosomal subunit protein uL23c (92 aa).

This sequence belongs to the universal ribosomal protein uL23 family. As to quaternary structure, part of the 50S ribosomal subunit.

It is found in the plastid. Its subcellular location is the chloroplast. In terms of biological role, binds to 23S rRNA. The protein is Large ribosomal subunit protein uL23c (rpl23) of Mesostigma viride (Green alga).